The chain runs to 483 residues: O-acetyltransferase pboB (483 aa).

This sequence belongs to the fumigaclavine B O-acetyltransferase family. In terms of assembly, monomer.

It functions in the pathway secondary metabolite biosynthesis. O-acetyltransferase; part of the gene cluster that mediates the biosynthesis of protubonine B, a hydroxylated and diacetylated cyclo-L-Trp-L-Leu derivative. Within the pathway, pboB catalyzes the acetylation of protubonine C at N-1 of the indoline ring to produce protubonine B. The first step of the protubonine B synthesis is performed by the nonribosomal peptide synthetase pboA that catalyzes the formation of cyclo-L-Trp-L-Leu by condensing L-Leu with L-Trp. The flavin-dependent monooxygenase pboD is responsible for hydroxylation at C-3 of the indole ring and subsequent formation of the pyrrolidine ring, leadind to protubonine D. Protubonine D is further diacetylated by two acetyltransferases, pboB and pboC, to form the final product protubonine B via protubonine C. The sequence is that of O-acetyltransferase pboB from Aspergillus ustus.